Consider the following 128-residue polypeptide: Lutropin subunit beta (128 aa).

Intrachain disulfides connect Cys18-Cys66, Cys32-Cys81, Cys35-Cys119, Cys43-Cys97, Cys47-Cys99, and Cys102-Cys109. An N-linked (GlcNAc...) asparagine glycan is attached at Asn22.

The protein belongs to the glycoprotein hormones subunit beta family. In terms of assembly, heterodimer of a common alpha chain and a unique beta chain which confers biological specificity to thyrotropin, lutropin, follitropin and gonadotropin.

It localises to the secreted. Functionally, promotes spermatogenesis and ovulation by stimulating the testes and ovaries to synthesize steroids. This chain is Lutropin subunit beta (LHB), found in Struthio camelus (Common ostrich).